The chain runs to 210 residues: Calcineurin B-like protein 4 (210 aa).

G2 is lipidated: N-myristoyl glycine. EF-hand domains are found at residues E31 to R66, K67 to K102, P104 to E139, and A148 to S183. Ca(2+) contacts are provided by D161, N163, D165, R167, and E172.

This sequence belongs to the calcineurin regulatory subunit family. In terms of assembly, homodimer. Interacts with CIPK24. As to expression, expressed in leaves.

The protein resides in the cell membrane. Functionally, acts as a calcium sensor involved in the regulatory pathway for the control of intracellular Na(+) and K(+) homeostasis and salt tolerance. Operates in synergy with CIPK24 to activate the plasma membrane Na(+)/H(+) antiporter SOS1. May function as positive regulator of salt stress responses. CBL proteins interact with CIPK serine-threonine protein kinases. Binding of a CBL protein to the regulatory NAF domain of a CIPK protein lead to the activation of the kinase in a calcium-dependent manner. The chain is Calcineurin B-like protein 4 (CBL4) from Oryza sativa subsp. japonica (Rice).